The chain runs to 595 residues: Chaperone protein HscA homolog (595 aa).

This sequence belongs to the heat shock protein 70 family.

In terms of biological role, chaperone involved in the maturation of iron-sulfur cluster-containing proteins. Has a low intrinsic ATPase activity which is markedly stimulated by HscB. The protein is Chaperone protein HscA homolog of Rickettsia conorii (strain ATCC VR-613 / Malish 7).